Consider the following 100-residue polypeptide: Large ribosomal subunit protein uL23 (100 aa).

It belongs to the universal ribosomal protein uL23 family. Part of the 50S ribosomal subunit. Contacts protein L29, and trigger factor when it is bound to the ribosome.

Its function is as follows. One of the early assembly proteins it binds 23S rRNA. One of the proteins that surrounds the polypeptide exit tunnel on the outside of the ribosome. Forms the main docking site for trigger factor binding to the ribosome. This Shewanella oneidensis (strain ATCC 700550 / JCM 31522 / CIP 106686 / LMG 19005 / NCIMB 14063 / MR-1) protein is Large ribosomal subunit protein uL23.